Reading from the N-terminus, the 175-residue chain is NADH-ubiquinone oxidoreductase chain 6 (175 aa).

The next 5 helical transmembrane spans lie at 1-21, 27-47, 49-69, 88-108, and 149-169; these read MMTYIVFILSTVFVVGFVGFS, VYGGVGLIVSGGVGCGIIMNF, GSFLGLMVFLIYLGGMMVVFG, VVFGAFVFGLFMEMLLVLYVL, and YGMWLVVVTGWSLFIAVVVVM.

It belongs to the complex I subunit 6 family. Core subunit of respiratory chain NADH dehydrogenase (Complex I) which is composed of 45 different subunits.

The protein resides in the mitochondrion inner membrane. It carries out the reaction a ubiquinone + NADH + 5 H(+)(in) = a ubiquinol + NAD(+) + 4 H(+)(out). In terms of biological role, core subunit of the mitochondrial membrane respiratory chain NADH dehydrogenase (Complex I) which catalyzes electron transfer from NADH through the respiratory chain, using ubiquinone as an electron acceptor. Essential for the catalytic activity and assembly of complex I. This chain is NADH-ubiquinone oxidoreductase chain 6 (MT-ND6), found in Pteropus scapulatus (Little red flying fox).